Here is a 392-residue protein sequence, read N- to C-terminus: Chaperone protein DnaJ (392 aa).

Residues D2–G67 enclose the J domain. The CR-type zinc-finger motif lies at G149–K227. Positions 162, 165, 179, 182, 201, 204, 215, and 218 each coordinate Zn(2+). 4 CXXCXGXG motif repeats span residues C162–G169, C179–G186, C201–G208, and C215–G222.

The protein belongs to the DnaJ family. In terms of assembly, homodimer. The cofactor is Zn(2+).

Its subcellular location is the cytoplasm. Functionally, participates actively in the response to hyperosmotic and heat shock by preventing the aggregation of stress-denatured proteins and by disaggregating proteins, also in an autonomous, DnaK-independent fashion. Unfolded proteins bind initially to DnaJ; upon interaction with the DnaJ-bound protein, DnaK hydrolyzes its bound ATP, resulting in the formation of a stable complex. GrpE releases ADP from DnaK; ATP binding to DnaK triggers the release of the substrate protein, thus completing the reaction cycle. Several rounds of ATP-dependent interactions between DnaJ, DnaK and GrpE are required for fully efficient folding. Also involved, together with DnaK and GrpE, in the DNA replication of plasmids through activation of initiation proteins. This Chlamydia muridarum (strain MoPn / Nigg) protein is Chaperone protein DnaJ.